We begin with the raw amino-acid sequence, 544 residues long: Chaperonin GroEL (544 aa).

ATP contacts are provided by residues 29–32 (TLGP), 86–90 (DGTTT), Gly-413, 476–478 (NAA), and Asp-492.

The protein belongs to the chaperonin (HSP60) family. As to quaternary structure, forms a cylinder of 14 subunits composed of two heptameric rings stacked back-to-back. Interacts with the co-chaperonin GroES.

The protein resides in the cytoplasm. The protein localises to the secreted. The catalysed reaction is ATP + H2O + a folded polypeptide = ADP + phosphate + an unfolded polypeptide.. Together with its co-chaperonin GroES, plays an essential role in assisting protein folding. The GroEL-GroES system forms a nano-cage that allows encapsulation of the non-native substrate proteins and provides a physical environment optimized to promote and accelerate protein folding. This chain is Chaperonin GroEL, found in Bacillus subtilis (strain 168).